The chain runs to 191 residues: Bcl-2-like protein 10 (191 aa).

Positions 79 to 98 (LSKDQDFSWSQLVMLLAFAG) match the BH1 motif. Lys-112 is covalently cross-linked (Glycyl lysine isopeptide (Lys-Gly) (interchain with G-Cter in ubiquitin)). The BH2 motif lies at 144–155 (RLEALGGWDGFC). Residues 166-183 (FWRRLLIQAFLSGFFATA) traverse the membrane as a helical segment.

Belongs to the Bcl-2 family. Interacts with BAX. Interacts with BCL2 and BCL2L1/BCLX. Interacts with APAF1. Interacts with ITPR1, ITPR2 and ITPR3; the interaction with ITPR1 is increased in the presence of AHCLY1. Interacts with AHCYL1. Interacts with HIP1R (via ENTH and I/LWEQ domains). Interacts with CASP9. Interacts with BCL2L11/BIM. Interacts with BIK. Interacts with UBQLN4. Interacts with NME2/NM23-H2. Interacts with PMAIP1/NOXA. Interacts with TPX2. Interacts with UBQLN1; in the cytoplasm. Interacts (via BH1 domain) with BECN1. Requires Ca(2+) as cofactor. In terms of processing, monoubiquitinated by UBQLN1; results in stabilization of BCL2L10 protein abundance and in relocalization from mitochondria to cytoplasm. In terms of tissue distribution, expressed in multiple embryonic tissues. Restricted to the ovary and testis in adult mice.

The protein resides in the mitochondrion. It localises to the nucleus membrane. Its subcellular location is the endoplasmic reticulum. It is found in the cytoplasm. The protein localises to the cytoskeleton. The protein resides in the spindle. Functionally, promotes cell survival by suppressing apoptosis induced by BAX but not BAK. Increases binding of AHCYL1/IRBIT to ITPR1. Reduces ITPR1-mediated calcium release from the endoplasmic reticulum cooperatively with AHCYL1/IRBIT under normal cellular conditions. Under apoptotic stress conditions, dissociates from ITPR1 and is displaced from mitochondria-associated endoplasmic reticulum membranes, leading to increased Ca(2+) transfer to mitochondria which promotes apoptosis. Required for the correct formation of the microtubule organizing center during oocyte cell division, potentially via regulation of protein abundance and localization of other microtubule organizing center components such as AURKA and TPX2. This chain is Bcl-2-like protein 10, found in Mus musculus (Mouse).